The chain runs to 520 residues: Endosomal/lysosomal proton channel TMEM175 (520 aa).

The interval 1–27 is disordered; it reads MGENDESEIIEHHDDEEMEKRRPPRTH. The Cytoplasmic segment spans residues 1–49; that stretch reads MGENDESEIIEHHDDEEMEKRRPPRTHAQSFLESVASSVKEGHSSTQSS. The span at 9-21 shows a compositional bias: basic and acidic residues; sequence IIEHHDDEEMEKR. Residues 50–72 form a helical membrane-spanning segment; it reads HRLLAYSDALISIIATVMILPVA. A RxxxFSD motif 1 motif is present at residues 51 to 57; sequence RLLAYSD. At 73–93 the chain is on the lumenal side; sequence HTKIQEDEELKQSIQALLTTK. The segment at 74–79 is short helix H1-1; that stretch reads TKIQED. Positions 81–87 are short helix H2-1; the sequence is ELKQSIQ. The helical transmembrane segment at 94-116 threads the bilayer; sequence IAVYLMTFLIVTVAWAAHIRLFQ. The Cytoplasmic portion of the chain corresponds to 117–122; sequence VIERID. A helical transmembrane segment spans residues 123–144; that stretch reads DTLALLNLACMMLITFLPYTFS. The Lumenal segment spans residues 145–154; that stretch reads LMATFPNNIL. Residues 155–176 traverse the membrane as a helical segment; that stretch reads GILLFCACVMVIGLIQALIVLY. Residues 177 to 200 lie on the Cytoplasmic side of the membrane; it reads GFSHPFLLNDQIQMSENQAYYKQH. Helical transmembrane passes span 201 to 221 and 222 to 242; these read ILKV…FSFI and FFQL…ISQC. Residues 243–274 are Cytoplasmic-facing; that stretch reads LKWIRSKAIGGQTDESPDSMPFYTYHPSEPLS. The chain crosses the membrane as a helical span at residues 275–299; sequence KERVEAFSDGVFAIVATLLILDICE. The RxxxFSD motif 2 motif lies at 277 to 283; sequence RVEAFSD. The Lumenal segment spans residues 300–326; that stretch reads GNVPDPSVVKKKFDNSLIAALQEYGPE. The short helix H1-2 stretch occupies residues 305 to 313; the sequence is PSVVKKKFD. The short helix H2-2 stretch occupies residues 315–321; that stretch reads SLIAALQ. A helical transmembrane segment spans residues 327-349; sequence YLAYFGSFVTVGLLWFVHHSLFL. Residues 350–355 lie on the Cytoplasmic side of the membrane; it reads HVTKAT. The chain crosses the membrane as a helical span at residues 356–377; sequence RLMGLFNTFSLAFVGGLPLAYQ. At 378–392 the chain is on the lumenal side; sequence LTHESPRGSRNELEA. The chain crosses the membrane as a helical span at residues 393–413; that stretch reads VQISCVIIFFASLFQLAIWVT. Topologically, residues 414 to 433 are cytoplasmic; the sequence is ALFTERETLHPYVRYGGREH. Residues 434–457 form a helical membrane-spanning segment; that stretch reads TFMLAKLSLYPCVALGTFFITCIL. At 458–459 the chain is on the lumenal side; it reads SR. A helical membrane pass occupies residues 460-486; the sequence is FSAPIFHMMEICIPFAFLLLRLLVRVA. The Cytoplasmic portion of the chain corresponds to 487–520; sequence LALLRWLFCSARNDLERIPVEEEESRLPINDIVT.

This sequence belongs to the TMEM175 family. Homodimer.

It is found in the endosome membrane. It localises to the lysosome membrane. The catalysed reaction is H(+)(in) = H(+)(out). It carries out the reaction K(+)(in) = K(+)(out). Active at low pH (under pH 4.6): proton channel activity is activated by luminal side protons. Polyunsaturated fatty acids, such as arachidonic acid, also activate the channel activity. Its function is as follows. Proton-activated proton channel that catalyzes proton efflux from endosomes and lysosomes to maintain a steady-state pH. Activated at low pH (under pH 4.6) by luminal side protons: selectively mediates lysosomal proton release from lysosomes, eliciting a proton leak that balances V-ATPase activity to maintain pH homeostasis. Regulation of lumenal pH stability is required for autophagosome-lysosome fusion. Also acts as a potassium channel at higher pH, regulating potassium conductance in endosomes and lysosomes. This chain is Endosomal/lysosomal proton channel TMEM175, found in Danio rerio (Zebrafish).